The following is a 184-amino-acid chain: Phosphopantetheine adenylyltransferase (184 aa).

Residue Ser8 coordinates substrate. Residues 8–9 (SF) and His16 contribute to the ATP site. Residues Lys40, Leu74, and Arg88 each contribute to the substrate site. Residues 89-91 (GLR), Glu99, and 123-129 (WSFVSST) contribute to the ATP site.

Belongs to the bacterial CoaD family. As to quaternary structure, homohexamer. The cofactor is Mg(2+).

The protein resides in the cytoplasm. The catalysed reaction is (R)-4'-phosphopantetheine + ATP + H(+) = 3'-dephospho-CoA + diphosphate. Its pathway is cofactor biosynthesis; coenzyme A biosynthesis; CoA from (R)-pantothenate: step 4/5. Functionally, reversibly transfers an adenylyl group from ATP to 4'-phosphopantetheine, yielding dephospho-CoA (dPCoA) and pyrophosphate. This is Phosphopantetheine adenylyltransferase from Deinococcus geothermalis (strain DSM 11300 / CIP 105573 / AG-3a).